Consider the following 92-residue polypeptide: Acyl-CoA-binding domain-containing protein 6 (92 aa).

The region spanning 3 to 88 (LKEEFEEHAE…VKQLLEVAAS (86 aa)) is the ACB domain. Residues 30–34 (YGLYK), Lys52, Lys56, and Tyr75 each bind an acyl-CoA.

This sequence belongs to the ACBP family. As to quaternary structure, interacts with PDLP8. In terms of tissue distribution, mostly expressed in seeds, stems, and siliques, and, to a lower extent, in leaves, flowers, and roots (at protein level). Highly expressed in root and shoot phloem companion cells.

It is found in the cytoplasm. The protein localises to the cell membrane. Its function is as follows. Binds medium- and long-chain acyl-CoA esters with very high affinity. May function as an intracellular carrier of acyl-CoA esters. Confers resistance to cold and freezing. Interacts with phosphatidylcholine and derivatives, but not phosphatidic acid and lysophosphatidylcholine. May be involved in phospholipid metabolism. The protein is Acyl-CoA-binding domain-containing protein 6 (ACBP6) of Arabidopsis thaliana (Mouse-ear cress).